The chain runs to 529 residues: Fibroblast growth factor receptor-like 1 (529 aa).

An N-terminal signal peptide occupies residues 1–20 (MTRSPALLLLLLGALPSAEA). Residues 21 to 374 (ARGPPRMADK…SSSSTSLPWP (354 aa)) lie on the Extracellular side of the membrane. Ig-like C2-type domains are found at residues 25–111 (PRMA…YTLI), 143–233 (PRFT…YKVD), and 242–350 (PVLT…AFLT). Cys-47 and Cys-95 are joined by a disulfide. N-linked (GlcNAc...) asparagine glycosylation is present at Asn-107. A disordered region spans residues 116 to 151 (ISPGKESPGPGGSSGGQEDPASQQWARPRFTQPSKM). Cys-168 and Cys-217 are joined by a disulfide. 3 N-linked (GlcNAc...) asparagine glycosylation sites follow: Asn-227, Asn-251, and Asn-289. A disulfide bridge links Cys-264 with Cys-334. Residues 375 to 395 (VVIGIPAGAVFILGTVLLWLC) traverse the membrane as a helical segment. The Cytoplasmic portion of the chain corresponds to 396–529 (QTKKKPCAPA…RIENNGGRVS (134 aa)). Residues 405 to 427 (ASTLPVPGHRPPGTSRERSGDKD) form a disordered region.

As to quaternary structure, interacts with FGF2 with a low affinity. Highly expressed in the kidney, brain and lung. Weakly expressed in the muscle, thymus, lymph node, stomach, intestine, colon and liver. Expressed in fetal cartilaginous structures like the nasal cartilage, the ribs and the sternum as well as in the cartilaginous rudiments of developing bones such as the vertebrae and the pelvic bone. High expression is found in the muscles of the tongue and the diaphragm.

The protein resides in the cell membrane. Functionally, has a negative effect on cell proliferation. This is Fibroblast growth factor receptor-like 1 (Fgfrl1) from Mus musculus (Mouse).